An 861-amino-acid polypeptide reads, in one-letter code: MQEQYRPDMIEPKVQQYWAENKVFKAIKDESKEKYYCLSMFPYPSGRLHMGHVRNYTIGDVISRYQRMLGKNVLQPFGWDAFGLPAEGAAIKNKTAPAKWTYENIAYMKKQLQLLGFGFDWDREIATCKPEYYKWEQWFFTELYKKGLVYKKTSTVNWCPNDETVLANEQVHEGCCWRCDTPVEQKEIPQWFIKITDYAEQLLGGLDTLPQWPDMVKTMQRNWIGRSEGVEITFDVANTNEKVAVYTTRPDTFYGVSYLGIAAAHPLASLAAQNNSELAAFIQEAKNAKVAEADLATMEKKGMATGLFAIHPLTGDKLPIWVANFVLMHYGTGAVMAVPAHDQRDFEFAQKYSLPIKQVIAPLADEEIDLTKQAFVEHGKLVNSDEFDGKNFDGAFNGIADKLEKLGVGKRQVNYRLRDWGVSRQRYWGAPIPMLTLENGDVVPAPMEDLPIILPEDVVMDGVKSPINADPNWAKTTFNDAPALKETDTFDTFMESSWYYARYTCPQYQNGMLDAEEANYWLPVDQYIGGIEHATMHLLYFRFFHKLLRDAGFVTSEEPADKLLCQGMVLADAFYYTSPTNERIWVSPTQVTLERDEKGRIIKATDPEGRELVHSGMTKMSKSKNNGIDPQEMVEKYGADTVRLFMMFASPAEMTLEWQESGVEGAKRFLGRVWNLVYQYQQNPAKTSLDLTALSAEQKVLRREVHKTIAKVSDDIGRRQTFNTAIAAVMELMNKLTKASLDSEQDRAVMAEALSAVVRMLYPITPHICFELWQALGNESAIDTAEWVKADEAAMVEDEKLIVVQVNGKVRGKVTVATDADEDTVKTIAFADENVKKFIDNQHIVKVIYVVGKLLNVVVKP.

Positions 42–52 (PYPSGRLHMGH) match the 'HIGH' region motif. The 'KMSKS' region motif lies at 619–623 (KMSKS). Position 622 (Lys622) interacts with ATP.

Belongs to the class-I aminoacyl-tRNA synthetase family.

The protein resides in the cytoplasm. It carries out the reaction tRNA(Leu) + L-leucine + ATP = L-leucyl-tRNA(Leu) + AMP + diphosphate. This chain is Leucine--tRNA ligase, found in Haemophilus influenzae (strain ATCC 51907 / DSM 11121 / KW20 / Rd).